The sequence spans 87 residues: MRTFTLIAILTCAVLVIFHVSAAEELEAQDVIQPEDIFTGVATLEEDRIFECSFSCDIKKNGKPCKGAGEKKCSGGWRCKMNFCVKF.

The N-terminal stretch at 1-23 is a signal peptide; sequence MRTFTLIAILTCAVLVIFHVSAA. Residues 24-48 constitute a propeptide that is removed on maturation; that stretch reads EELEAQDVIQPEDIFTGVATLEEDR. Disulfide bonds link C52-C65, C56-C79, and C73-C84.

This sequence belongs to the neurotoxin 12 (Hwtx-2) family. 03 (juruin) subfamily. As to expression, expressed by the venom gland.

The protein resides in the secreted. Functionally, probable ion channel inhibitor. The chain is U3-theraphotoxin-Cg1b from Chilobrachys guangxiensis (Chinese earth tiger tarantula).